A 365-amino-acid polypeptide reads, in one-letter code: Protein RecA (365 aa).

Residue 73-80 (GPESSGKT) coordinates ATP.

This sequence belongs to the RecA family.

It is found in the cytoplasm. Its function is as follows. Can catalyze the hydrolysis of ATP in the presence of single-stranded DNA, the ATP-dependent uptake of single-stranded DNA by duplex DNA, and the ATP-dependent hybridization of homologous single-stranded DNAs. It interacts with LexA causing its activation and leading to its autocatalytic cleavage. This is Protein RecA from Prochlorococcus marinus (strain MIT 9312).